The primary structure comprises 116 residues: Endoribonuclease toxin ChpB (116 aa).

Belongs to the PemK/MazF family. In terms of assembly, homodimer, interacts with ChpS, which inhibits the endoribonuclease activity.

Stimulated in vitro in a concentration-dependent fashion by extracellular death factor (EDF, a quorum sensing pentapeptide sequence NNWNN, probably produced from the zwf gene product glucose-6-phosphate 1-dehydrogenase), which is able to overcome inhibition by cognate antitoxin ChpS. In terms of biological role, toxic component of a type II toxin-antitoxin (TA) system. ChpB is a sequence-specific mRNA and (weak) tmRNA endoribonuclease that inhibits protein synthesis and induces bacterial stasis. Cleavage is independent of the ribosome. Cleavage occurs at ACY sequences where Y is not C. The endoribonuclease activity is not as strong as that of MazF. The endoribonuclease activity (a toxin) is inhibited by its labile cognate antitoxin ChpS. Toxicity results when the levels of ChpS decrease in the cell, leading to mRNA degradation. Both ChpS and ChpB probably bind to the promoter region of the chpS-chpB operon to autoregulate their synthesis. The chain is Endoribonuclease toxin ChpB (chpB) from Escherichia coli (strain K12).